The following is a 129-amino-acid chain: Large ribosomal subunit protein uL22 (129 aa).

This sequence belongs to the universal ribosomal protein uL22 family. In terms of assembly, part of the 50S ribosomal subunit.

This protein binds specifically to 23S rRNA; its binding is stimulated by other ribosomal proteins, e.g. L4, L17, and L20. It is important during the early stages of 50S assembly. It makes multiple contacts with different domains of the 23S rRNA in the assembled 50S subunit and ribosome. Its function is as follows. The globular domain of the protein is located near the polypeptide exit tunnel on the outside of the subunit, while an extended beta-hairpin is found that lines the wall of the exit tunnel in the center of the 70S ribosome. The polypeptide is Large ribosomal subunit protein uL22 (Sinorhizobium medicae (strain WSM419) (Ensifer medicae)).